Reading from the N-terminus, the 375-residue chain is MSSHKGSAGAQGNGAPSGNREADTVELAELGPLLEEKGKRAASSPAKAEEDQACPVPQEEEEEVRVLTLPLQAHHAMEKMEEFVYKVWEGRWRVIPYDVLPDWLKDNDYLLHGHRPPMPSFRACFKSIFRIHTETGNIWTHLLGFVLFLFLGILTMLRPNMYFMAPLQEKVVFGMFFLGAVLCLSFSWLFHTVYCHSEKVSRTFSKLDYSGIALLIMGSFVPWLYYSFYCSPQPRLIYLSIVCVLGISAIIVAQWDRFATPKHRQTRAGVFLGLGLSGVVPTMHFTIAEGFVKATTVGQMGWFFLMAVMYITGAGLYAARIPERFFPGKFDIWFQSHQIFHVLVVAAAFVHFYGVSNLQEFRYGLEGGCTDDSLL.

The segment at 1-60 (MSSHKGSAGAQGNGAPSGNREADTVELAELGPLLEEKGKRAASSPAKAEEDQACPVPQEE) is disordered. Residues 1 to 136 (MSSHKGSAGA…SIFRIHTETG (136 aa)) are Cytoplasmic-facing. A helical transmembrane segment spans residues 137-157 (NIWTHLLGFVLFLFLGILTML). Topologically, residues 158–170 (RPNMYFMAPLQEK) are extracellular. The helical transmembrane segment at 171–191 (VVFGMFFLGAVLCLSFSWLFH) threads the bilayer. Position 191 (His191) interacts with Zn(2+). Topologically, residues 192–203 (TVYCHSEKVSRT) are cytoplasmic. The chain crosses the membrane as a helical span at residues 204–224 (FSKLDYSGIALLIMGSFVPWL). Residues 225 to 234 (YYSFYCSPQP) are Extracellular-facing. A helical membrane pass occupies residues 235–255 (RLIYLSIVCVLGISAIIVAQW). The Cytoplasmic portion of the chain corresponds to 256–264 (DRFATPKHR). The helical transmembrane segment at 265–285 (QTRAGVFLGLGLSGVVPTMHF) threads the bilayer. Residues 286–298 (TIAEGFVKATTVG) are Extracellular-facing. A helical membrane pass occupies residues 299 to 319 (QMGWFFLMAVMYITGAGLYAA). At 320–337 (RIPERFFPGKFDIWFQSH) the chain is on the cytoplasmic side. The Zn(2+) site is built by His337 and His341. The helical transmembrane segment at 338–358 (QIFHVLVVAAAFVHFYGVSNL) threads the bilayer. Topologically, residues 359 to 375 (QEFRYGLEGGCTDDSLL) are extracellular.

This sequence belongs to the ADIPOR family. As to quaternary structure, may form homooligomers and heterooligomers with ADIPOR2. Interacts with APPL2 (via BAR domain); hinders the accessibility of APPL1 to ADIPOR1; negatively regulates adiponectin signaling; ADIPOQ dissociates this interaction and facilitates the recruitment of APPL1 to ADIPOR1. Interacts with APPL1; ADIPOQ enhances this interaction; inhibites adiponectin-stimulated binding of APPL2 to ADIPOR1. As to expression, detected in brain and quadriceps muscle (at protein level). Widely expressed. Expressed in heart, kidney, liver, lung, skeletal muscle, white adipose tissue, brown adipose tissue, aorta and spleen. Weakly expressed in brain and testis.

It is found in the cell membrane. Receptor for ADIPOQ, an essential hormone secreted by adipocytes that regulates glucose and lipid metabolism. Required for normal glucose and fat homeostasis and for maintaining a normal body weight. ADIPOQ-binding activates a signaling cascade that leads to increased AMPK activity, and ultimately to increased fatty acid oxidation, increased glucose uptake and decreased gluconeogenesis. Has high affinity for globular adiponectin and low affinity for full-length adiponectin. This is Adiponectin receptor protein 1 from Mus musculus (Mouse).